The sequence spans 631 residues: 1-deoxy-D-xylulose-5-phosphate synthase (631 aa).

Residues H73, 113–115 (SHA), N174, Y285, and E367 each bind thiamine diphosphate. N174 contributes to the Mg(2+) binding site.

The protein belongs to the transketolase family. DXPS subfamily. In terms of assembly, homodimer. The cofactor is Mg(2+). Thiamine diphosphate serves as cofactor.

The enzyme catalyses D-glyceraldehyde 3-phosphate + pyruvate + H(+) = 1-deoxy-D-xylulose 5-phosphate + CO2. The protein operates within metabolic intermediate biosynthesis; 1-deoxy-D-xylulose 5-phosphate biosynthesis; 1-deoxy-D-xylulose 5-phosphate from D-glyceraldehyde 3-phosphate and pyruvate: step 1/1. In terms of biological role, catalyzes the acyloin condensation reaction between C atoms 2 and 3 of pyruvate and glyceraldehyde 3-phosphate to yield 1-deoxy-D-xylulose-5-phosphate (DXP). This is 1-deoxy-D-xylulose-5-phosphate synthase from Streptomyces sp. (strain CL190).